A 142-amino-acid polypeptide reads, in one-letter code: MYYVALDVGSRTLGIATGDGEFKIASPYCVISFNQYDFRQCLAELKEKTASFFYDFKFVIGMPKNIDQTKSSTTEMVENFIELLKANYKNEVIIYDESYTSIIADQLLIDNQIKAKKRKEKIDKLAAFVILQSFFDDDRYPK.

Belongs to the YqgF nuclease family.

It is found in the cytoplasm. Its function is as follows. Could be a nuclease involved in processing of the 5'-end of pre-16S rRNA. The chain is Putative pre-16S rRNA nuclease from Mycoplasmoides gallisepticum (strain R(low / passage 15 / clone 2)) (Mycoplasma gallisepticum).